We begin with the raw amino-acid sequence, 681 residues long: Transmembrane protein 214-A (681 aa).

Disordered regions lie at residues 1 to 41 and 58 to 99; these read MASG…GTAP and KKQN…GSRQ. Residues Asn300 and Asn324 are each glycosylated (N-linked (GlcNAc...) asparagine). A run of 2 helical transmembrane segments spans residues 471 to 491 and 608 to 628; these read GFPWRRLIVIAFVFLFGFVFY and LLLHLHRTYLLPAVTYLEAAV.

It belongs to the TMEM214 family. In terms of assembly, constitutively interacts with CASP4; required for the localization of procaspase 4 to the ER.

Its subcellular location is the endoplasmic reticulum membrane. In terms of biological role, critical mediator, in cooperation with CASP4, of endoplasmic reticulum-stress induced apoptosis. Required or the activation of CASP4 following endoplasmic reticulum stress. The chain is Transmembrane protein 214-A (tmem214-a) from Xenopus laevis (African clawed frog).